The sequence spans 211 residues: Ribosomal RNA large subunit methyltransferase E (211 aa).

Residues G60, W62, D85, D101, and D126 each contribute to the S-adenosyl-L-methionine site. Residue K166 is the Proton acceptor of the active site.

The protein belongs to the class I-like SAM-binding methyltransferase superfamily. RNA methyltransferase RlmE family.

The protein localises to the cytoplasm. It catalyses the reaction uridine(2552) in 23S rRNA + S-adenosyl-L-methionine = 2'-O-methyluridine(2552) in 23S rRNA + S-adenosyl-L-homocysteine + H(+). Its function is as follows. Specifically methylates the uridine in position 2552 of 23S rRNA at the 2'-O position of the ribose in the fully assembled 50S ribosomal subunit. In Bordetella petrii (strain ATCC BAA-461 / DSM 12804 / CCUG 43448), this protein is Ribosomal RNA large subunit methyltransferase E.